The primary structure comprises 150 residues: Auxin-binding protein 5 (150 aa).

Positions 1 to 41 are cleaved as a signal peptide; it reads MVRRRPATGAAQRPQLAAVGRGLLLASVLAAAASSLPVAES. Zn(2+) contacts are provided by H98, H100, and E104. N136 is a glycosylation site (N-linked (GlcNAc...) asparagine). Position 147 (H147) interacts with Zn(2+).

Homodimer.

Its subcellular location is the endoplasmic reticulum lumen. Functionally, this is probably a receptor for the plant hormone auxin. The polypeptide is Auxin-binding protein 5 (ABP5) (Zea mays (Maize)).